Here is a 652-residue protein sequence, read N- to C-terminus: DNA ligase (652 aa).

Residues 29-33 (DSEYD), 78-79 (SL), and E107 each bind NAD(+). The active-site N6-AMP-lysine intermediate is the K109. 4 residues coordinate NAD(+): R130, E164, K278, and K302. C395, C398, C413, and C418 together coordinate Zn(2+). The BRCT domain occupies 577–652 (AADAVLSGKT…IQDEAWLEQL (76 aa)).

The protein belongs to the NAD-dependent DNA ligase family. LigA subfamily. It depends on Mg(2+) as a cofactor. The cofactor is Mn(2+).

The enzyme catalyses NAD(+) + (deoxyribonucleotide)n-3'-hydroxyl + 5'-phospho-(deoxyribonucleotide)m = (deoxyribonucleotide)n+m + AMP + beta-nicotinamide D-nucleotide.. Its function is as follows. DNA ligase that catalyzes the formation of phosphodiester linkages between 5'-phosphoryl and 3'-hydroxyl groups in double-stranded DNA using NAD as a coenzyme and as the energy source for the reaction. It is essential for DNA replication and repair of damaged DNA. This Streptococcus gordonii (strain Challis / ATCC 35105 / BCRC 15272 / CH1 / DL1 / V288) protein is DNA ligase.